A 215-amino-acid chain; its full sequence is Pyrrolidone-carboxylate peptidase 1 (215 aa).

Residues E80, C143, and H167 contribute to the active site.

It belongs to the peptidase C15 family. Homotetramer.

Its subcellular location is the cytoplasm. The catalysed reaction is Release of an N-terminal pyroglutamyl group from a polypeptide, the second amino acid generally not being Pro.. In terms of biological role, removes 5-oxoproline from various penultimate amino acid residues except L-proline. In Ralstonia nicotianae (strain ATCC BAA-1114 / GMI1000) (Ralstonia solanacearum), this protein is Pyrrolidone-carboxylate peptidase 1.